The following is a 354-amino-acid chain: UDP-3-O-acylglucosamine N-acyltransferase (354 aa).

Histidine 247 (proton acceptor) is an active-site residue.

Belongs to the transferase hexapeptide repeat family. LpxD subfamily. In terms of assembly, homotrimer.

The enzyme catalyses a UDP-3-O-[(3R)-3-hydroxyacyl]-alpha-D-glucosamine + a (3R)-hydroxyacyl-[ACP] = a UDP-2-N,3-O-bis[(3R)-3-hydroxyacyl]-alpha-D-glucosamine + holo-[ACP] + H(+). It functions in the pathway bacterial outer membrane biogenesis; LPS lipid A biosynthesis. In terms of biological role, catalyzes the N-acylation of UDP-3-O-acylglucosamine using 3-hydroxyacyl-ACP as the acyl donor. Is involved in the biosynthesis of lipid A, a phosphorylated glycolipid that anchors the lipopolysaccharide to the outer membrane of the cell. The chain is UDP-3-O-acylglucosamine N-acyltransferase from Chlamydia trachomatis serovar L2b (strain UCH-1/proctitis).